Reading from the N-terminus, the 75-residue chain is Notewaprin-b (75 aa).

The first 24 residues, 1 to 24, serve as a signal peptide directing secretion; that stretch reads MSSGGLLLLLGLLTLWAELTPVSS. The WAP domain occupies 27–72; that stretch reads RPKKPGLCPPRPQKPPCVRECKNDWICPGEQKCCRYGCIYECRDPI. Intrachain disulfides connect Cys34–Cys60, Cys43–Cys64, Cys47–Cys59, and Cys53–Cys68.

Belongs to the venom waprin family. In terms of tissue distribution, expressed by the venom gland.

Its subcellular location is the secreted. Damages membranes of susceptible bacteria. Has no hemolytic activity. Not toxic to mice. Does not inhibit the proteinases elastase and cathepsin G. The protein is Notewaprin-b of Notechis scutatus scutatus (Mainland tiger snake).